A 270-amino-acid polypeptide reads, in one-letter code: uncharacterized protein (270 aa).

This is an uncharacterized protein from Bacillus subtilis (strain 168).